A 311-amino-acid chain; its full sequence is MDYKEEFKKINKKLVERYSKLDDSEEFWAYLYKPLRPSIRINTLKGNLKEIKALLEEKFELEPIPWTKGEGFYIKSYDVNYGQLIEYSLGLIIPQEASSMIPPVVLDPKPSEVILDMAAAPGSKTTQMAQYMENEGCIIANDAKRDRANILIANLTRAGVLIAKVTVKDGAYFARYENTFDRVLLDAPCSSVGMIRKNFKFARTWSIGKVYYHSRLQKRLILAAYKSLKPGGVLVYSTCTVDPLENEEVVDFLLQKTDAKLEKVKLPLKTSEPVIEWEGRKYSDEVRKTIRIHPQDNDTEAFYIAKIRKPR.

S-adenosyl-L-methionine-binding positions include 118–124 (AAAPGSK), D142, D169, and D186. C239 serves as the catalytic Nucleophile.

The protein belongs to the class I-like SAM-binding methyltransferase superfamily. RsmB/NOP family. Forms a tripartite complex with archease and tRNA. Binds only the oligomeric forms of the archease.

Its subcellular location is the cytoplasm. It carries out the reaction cytidine(49) in tRNA precursor + S-adenosyl-L-methionine = 5-methylcytidine(49) in tRNA precursor + S-adenosyl-L-homocysteine + H(+). With respect to regulation, substrate specificity and tendency to aggregate are influenced by archease. In terms of biological role, catalyzes AdoMet-dependent formation of m5C in tRNA. In the presence of protein archease, specifically methylates the cytosine at position 49 (m5C49) of tRNA. In the absence of archease, catalyzes the formation of m5C at many locations in tRNAs or rRNAs. The protein is tRNA (cytosine(49)-C(5))-methyltransferase of Pyrococcus abyssi (strain GE5 / Orsay).